The following is a 1221-amino-acid chain: Probable serine/threonine-protein kinase DDB_G0286465 (1221 aa).

Disordered regions lie at residues M1–T37, F104–Q133, and E173–E263. Composition is skewed to low complexity over residues S24–T37, K112–Y127, E173–K192, and N204–E263. The region spanning I186 to F627 is the Protein kinase domain. K192–V200 lines the ATP pocket. K271 serves as a coordination point for ATP. The span at N324–S344 shows a compositional bias: low complexity. The interval N324–Y346 is disordered. D448 acts as the Proton acceptor in catalysis. 2 stretches are compositionally biased toward low complexity: residues S538–S550 and D559–K584. Disordered regions lie at residues S538–R604, P712–L782, K823–P858, K959–N1008, and K1105–K1152. Residues R591–R604 show a composition bias toward basic and acidic residues. Positions K725–Q738 are enriched in low complexity. Positions D746–K756 are enriched in acidic residues. 2 stretches are compositionally biased toward basic and acidic residues: residues E757–E769 and K823–A850. The segment covering K959 to N993 has biased composition (low complexity).

It belongs to the protein kinase superfamily. Ser/Thr protein kinase family.

It carries out the reaction L-seryl-[protein] + ATP = O-phospho-L-seryl-[protein] + ADP + H(+). The catalysed reaction is L-threonyl-[protein] + ATP = O-phospho-L-threonyl-[protein] + ADP + H(+). The sequence is that of Probable serine/threonine-protein kinase DDB_G0286465 from Dictyostelium discoideum (Social amoeba).